A 254-amino-acid polypeptide reads, in one-letter code: MLQTEMKVIQQTEIADKVYELILSGECVMDMSPGQFLMLKPSRSDLLMRRPISICSYDKSAQTCILLYRVEGDGTEDFSKLSSDDTIDVLGPLGKGFDIDRTPEPKTALLIGGGIGVPPMYQLGKELAGKGVQVTFVNGFQSAKDSFYEKEMTKYGTVHIATVDGTLGTQGFVTDITKNFLEEPDVIYSCGPKAMLEAVKASFPETKTYLSLEERMACGIGACYACVCPKADDRNKQFKVCEDGPVFRADEVSL.

Residues 1–99 (MLQTEMKVIQ…LGPLGKGFDI (99 aa)) form the FAD-binding FR-type domain. FAD contacts are provided by residues 50 to 53 (RPIS), 67 to 69 (LYR), and 74 to 75 (GT). Residues Cys-218, Cys-223, Cys-226, and Cys-241 each contribute to the [2Fe-2S] cluster site.

It belongs to the PyrK family. In terms of assembly, heterotetramer of 2 PyrK and 2 PyrD type B subunits. [2Fe-2S] cluster is required as a cofactor. The cofactor is FAD.

The protein operates within pyrimidine metabolism; UMP biosynthesis via de novo pathway; orotate from (S)-dihydroorotate (NAD(+) route): step 1/1. Functionally, responsible for channeling the electrons from the oxidation of dihydroorotate from the FMN redox center in the PyrD type B subunit to the ultimate electron acceptor NAD(+). In Listeria welshimeri serovar 6b (strain ATCC 35897 / DSM 20650 / CCUG 15529 / CIP 8149 / NCTC 11857 / SLCC 5334 / V8), this protein is Dihydroorotate dehydrogenase B (NAD(+)), electron transfer subunit.